The chain runs to 537 residues: MTAPEPAPESATATARRILAALVEAGVTEIVVAPGSRNAPLSFAAYDAAAAGLVRLHTRLDERTAGFLALGLTRSGRRAAVVCTSGTAVANLHPAVLEAAHAGVDLVVVSADRPARLRGTGANQTTDQVGIFGPLVPTQDASGPVELLTAGPVHLNVPLEEPLVPDDRWLPDVVPGEPAHRVIPASLTVLARGPRTVVVAGDDAGPRVRVLAEQAGWPLLAEPSSGSRTGDNAIRTYRLLLDGDLGARVERVVVGGHPTLSRPVSRLLARPDVEVVDLGAWGVWSERPFPVHSRILGGVGVDAPVDAADGTADDTDWLEEWRTADRAVSARLDALLAAEPGLTPHEVAGAVARALPAGGLLVVGASSPIRDLDLMVPRYDVGARRKVVANRGLAGIDGTISTAVGAALGRPRSTRALTLMGDVTFLHDAGALVIGPGEAVPDLTIVVVNDDGGSIFAMLEQGAAEYADQYDRLFGTPHRVDLASLCAATRTPHWRVDSLAELEHALASPAGGIEVVEAVVRRDNRRDLDERIRALRP.

This sequence belongs to the TPP enzyme family. MenD subfamily. In terms of assembly, homodimer. It depends on Mg(2+) as a cofactor. Mn(2+) is required as a cofactor. Thiamine diphosphate serves as cofactor.

The catalysed reaction is isochorismate + 2-oxoglutarate + H(+) = 5-enolpyruvoyl-6-hydroxy-2-succinyl-cyclohex-3-ene-1-carboxylate + CO2. Its pathway is quinol/quinone metabolism; 1,4-dihydroxy-2-naphthoate biosynthesis; 1,4-dihydroxy-2-naphthoate from chorismate: step 2/7. The protein operates within quinol/quinone metabolism; menaquinone biosynthesis. Functionally, catalyzes the thiamine diphosphate-dependent decarboxylation of 2-oxoglutarate and the subsequent addition of the resulting succinic semialdehyde-thiamine pyrophosphate anion to isochorismate to yield 2-succinyl-5-enolpyruvyl-6-hydroxy-3-cyclohexene-1-carboxylate (SEPHCHC). The protein is 2-succinyl-5-enolpyruvyl-6-hydroxy-3-cyclohexene-1-carboxylate synthase of Nocardioides sp. (strain ATCC BAA-499 / JS614).